Consider the following 286-residue polypeptide: Shikimate dehydrogenase (NADP(+)) (286 aa).

Shikimate-binding positions include 21 to 23 (TLS) and threonine 68. The Proton acceptor role is filled by lysine 72. Aspartate 84 is an NADP(+) binding site. Shikimate-binding residues include asparagine 93 and aspartate 108. Residues 132–136 (GYGGA) and leucine 226 each bind NADP(+). Tyrosine 228 lines the shikimate pocket. An NADP(+)-binding site is contributed by glycine 249.

Belongs to the shikimate dehydrogenase family. In terms of assembly, homodimer.

It catalyses the reaction shikimate + NADP(+) = 3-dehydroshikimate + NADPH + H(+). It functions in the pathway metabolic intermediate biosynthesis; chorismate biosynthesis; chorismate from D-erythrose 4-phosphate and phosphoenolpyruvate: step 4/7. Functionally, involved in the biosynthesis of the chorismate, which leads to the biosynthesis of aromatic amino acids. Catalyzes the reversible NADPH linked reduction of 3-dehydroshikimate (DHSA) to yield shikimate (SA). In Thermosynechococcus vestitus (strain NIES-2133 / IAM M-273 / BP-1), this protein is Shikimate dehydrogenase (NADP(+)).